Consider the following 793-residue polypeptide: Translocase of chloroplast 90, chloroplastic (793 aa).

The segment at 22 to 59 (LGSDPFFRDPHQEQDNHSQAPAAPQPVTLSEPPCSTSS) is disordered. Positions 27–37 (FFRDPHQEQDN) are enriched in basic and acidic residues. Positions 130–157 (LIRAEESELKNVKLRQDRAKALAREQES) form a coiled coil. The AIG1-type G domain occupies 164-394 (DFSLRILVLG…FRDSIGLGQP (231 aa)). Positions 173–180 (GKTGVGKS) are G1. GTP is bound by residues 176-181 (GVGKSA) and 195-200 (DAFRPG). S180 is a Mg(2+) binding site. The interval 195 to 198 (DAFR) is homodimerization. The interval 199 to 203 (PGTDR) is G2. The interval 220–223 (DTPG) is G3. The homodimerization stretch occupies residues 259–264 (RLDMID). A helical membrane pass occupies residues 279–297 (IFGAAIWLNTILVMTHSAA). A G4 region spans residues 293-296 (THSA). GTP contacts are provided by residues H294 and 341–342 (EN). The segment at 341–343 (ENH) is G5. Coiled-coil stretches lie at residues 410–442 (LRRRLSSGADETEKEIDKLLNLDLEEEDEYDQL) and 477–503 (KKQLKEECRRRRDEKLVEEENLEDTEQ).

The protein belongs to the TRAFAC class TrmE-Era-EngA-EngB-Septin-like GTPase superfamily. AIG1/Toc34/Toc159-like paraseptin GTPase family. TOC159 subfamily. Homodimer. Part of the TOC core complex that includes 1 protein for the specific recognition of transit peptides surrounded by a ring composed of four proteins forming translocation channels, and four to five GTP-binding proteins providing energy. This core complex can interact with components of the TIC complex to form a larger import complex. Chloroplastic protein precursor such as prSS (precursor of the RuBisCO small subunit) interacts with these complexes. The TOC complex contains a specific subset of polar lipids such as digalactosyldiacylglyceride (DGDG), phosphatidylcholine (PC) and phosphatidylglycerol (PG). Interacts with TOC33 and TOC75. The cofactor is Mg(2+). Expressed in seedlings, leaves, flowers, and roots.

It is found in the plastid. Its subcellular location is the chloroplast outer membrane. It localises to the cytoplasm. In terms of biological role, GTPase involved in protein precursor import into chloroplasts. Seems to recognize chloroplast-destined precursor proteins and regulate their presentation to the translocation channel through GTP hydrolysis. Probably specialized in the import of nuclear encoded photosynthetic preproteins from the cytoplasm to the chloroplast. The polypeptide is Translocase of chloroplast 90, chloroplastic (TOC90) (Arabidopsis thaliana (Mouse-ear cress)).